A 248-amino-acid chain; its full sequence is Regulator of G-protein signaling 7-binding protein A (248 aa).

Residues 1–32 form a disordered region; the sequence is MSSAPNGRKNRPRTAGTIFQIGGKAPSRESER. S-palmitoyl cysteine attachment occurs at residues Cys-243 and Cys-244.

This sequence belongs to the RGS7BP/RGS9BP family. In terms of processing, palmitoylated. Undergoes rapid palmitoylation turnover. Palmitoylation regulates the cell membrane and nuclear shuttling and the regulation of GPCR signaling. Upon depalmitoylation, it is targeted from the plasma membrane into the nucleus. GPCR signaling inhibits depalmitoylation and promotes localization to the plasma membrane.

Its subcellular location is the nucleus. It is found in the cytoplasm. It localises to the cell membrane. In terms of biological role, regulator of G protein-coupled receptor (GPCR) signaling. Regulatory subunit of the R7-Gbeta5 complexes that acts by controlling the subcellular location of the R7-Gbeta5 complexes. When palmitoylated, it targets the R7-Gbeta5 complexes to the plasma membrane, leading to inhibit G protein alpha subunits. When it is unpalmitoylated, the R7-Gbeta5 complexes undergo a nuclear/cytoplasmic shuttling. The protein is Regulator of G-protein signaling 7-binding protein A (rgs7bpa) of Danio rerio (Zebrafish).